We begin with the raw amino-acid sequence, 126 residues long: Fluoride-specific ion channel FluC (126 aa).

Helical transmembrane passes span tryptophan 35–leucine 55, valine 71–phenylalanine 91, and leucine 101–isoleucine 121. Residues glycine 75 and threonine 78 each coordinate Na(+).

This sequence belongs to the fluoride channel Fluc/FEX (TC 1.A.43) family.

It localises to the cell inner membrane. The enzyme catalyses fluoride(in) = fluoride(out). Na(+) is not transported, but it plays an essential structural role and its presence is essential for fluoride channel function. In terms of biological role, fluoride-specific ion channel. Important for reducing fluoride concentration in the cell, thus reducing its toxicity. This is Fluoride-specific ion channel FluC from Sphingopyxis alaskensis (strain DSM 13593 / LMG 18877 / RB2256) (Sphingomonas alaskensis).